The chain runs to 84 residues: Sec-independent protein translocase protein TatA (84 aa).

Residues 1–21 (MGGFSIWHWLIVLLIVVMVFG) traverse the membrane as a helical segment. The interval 40–84 (KDGMKDGGQSPADEKPVVPASQVTNAQAADKAERNTIDVEARQKS) is disordered. A compositionally biased stretch (basic and acidic residues) spans 69-84 (DKAERNTIDVEARQKS).

This sequence belongs to the TatA/E family. In terms of assembly, the Tat system comprises two distinct complexes: a TatABC complex, containing multiple copies of TatA, TatB and TatC subunits, and a separate TatA complex, containing only TatA subunits. Substrates initially bind to the TatABC complex, which probably triggers association of the separate TatA complex to form the active translocon.

Its subcellular location is the cell inner membrane. Functionally, part of the twin-arginine translocation (Tat) system that transports large folded proteins containing a characteristic twin-arginine motif in their signal peptide across membranes. TatA could form the protein-conducting channel of the Tat system. The polypeptide is Sec-independent protein translocase protein TatA (Polaromonas naphthalenivorans (strain CJ2)).